The chain runs to 149 residues: Putative pre-16S rRNA nuclease (149 aa).

It belongs to the YqgF nuclease family.

Its subcellular location is the cytoplasm. Could be a nuclease involved in processing of the 5'-end of pre-16S rRNA. This chain is Putative pre-16S rRNA nuclease, found in Burkholderia vietnamiensis (strain G4 / LMG 22486) (Burkholderia cepacia (strain R1808)).